The primary structure comprises 828 residues: Molybdenum cofactor sulfurase (828 aa).

The residue at position 239 (lysine 239) is an N6-(pyridoxal phosphate)lysine. The active site involves cysteine 402. The disordered stretch occupies residues 638–682 (TRYTRRSLHSRSSTAALRRQRPVEESSMPGSFPSDTPLSRTPEPP). The MOSC domain occupies 652–825 (AALRRQRPVE…VMVGDVVRPW (174 aa)).

Belongs to the class-V pyridoxal-phosphate-dependent aminotransferase family. MOCOS subfamily. It depends on pyridoxal 5'-phosphate as a cofactor.

It catalyses the reaction Mo-molybdopterin + L-cysteine + AH2 = thio-Mo-molybdopterin + L-alanine + A + H2O. Sulfurates the molybdenum cofactor. Sulfation of molybdenum is essential for xanthine dehydrogenase (XDH) and aldehyde oxidase (ADO) enzymes in which molybdenum cofactor is liganded by 1 oxygen and 1 sulfur atom in active form. The sequence is that of Molybdenum cofactor sulfurase from Aspergillus terreus (strain NIH 2624 / FGSC A1156).